A 353-amino-acid chain; its full sequence is Phosphate acyltransferase (353 aa).

This sequence belongs to the PlsX family. As to quaternary structure, homodimer. Probably interacts with PlsY.

The protein localises to the cytoplasm. It catalyses the reaction a fatty acyl-[ACP] + phosphate = an acyl phosphate + holo-[ACP]. It participates in lipid metabolism; phospholipid metabolism. Its function is as follows. Catalyzes the reversible formation of acyl-phosphate (acyl-PO(4)) from acyl-[acyl-carrier-protein] (acyl-ACP). This enzyme utilizes acyl-ACP as fatty acyl donor, but not acyl-CoA. The sequence is that of Phosphate acyltransferase from Myxococcus xanthus (strain DK1622).